The chain runs to 1268 residues: MSSVAVLTQESFAEHRSGLVPQQIKVATLNSEEESDPPTYKDAFPPLPEKAACLESAQEPAGAWGNKIRPIKASVITQVFHVPLEERKYKDMNQFGEGEQAKICLEIMQRTGAHLELSLAKDQGLSIMVSGKLDAVMKARKDIVARLQTQASATVAIPKEHHRFVIGKNGEKLQDLELKTATKIQIPRPDDPSNQIKITGTKEGIEKARHEVLLISAEQDERAVERLEVEKAFHPFIAGPYNRLVGEIMQETGTRINIPPPSVNRTEIVFTGEKEQLAQAVARIKKIYEEKKKKTTTIAVEVKKSQHKYVIGPKGNSLQEILERTGVSVEIPPSDSISETVILRGEPEKLGQALTEVYAKANSFTVSSVAAPSWLHRFIIGKKGQNLAKITQQMPKVHIEFTEGEDKITLEGPTEDVSVTQEHIEGMVKDLINRMDYVEINIDHKFHRHLIGKSGANINRIKDQYKVSVRIPPDSEKSNLIRIEGDPQGVQQAKRELLELASRMENERTKDLIIEQRFHRTIIGQKGERIREIRDKFPEVIINFPDPAQKSDIVQLRGPKNEVEKCTKYMQKMVADLVENSYSISVPIFKQFHKNIIGKGGANIKKIREESNTKIDLPAENSNSETIIITGKRANCEAARSRILSIQKDLANIAEVEVSIPAKLHNSLIGTKGRLIRSIMEECGGVHIHFPVEGSGSDTVVIRGPSSDVEKAKKQLLHLAEEKQTKSFTVDIRAKPEYHKFLIGKGGGKIRKVRDSTGARVIFPAAEDKDQDLITIIGKEDAVREAQKELEALIQNLDNVVEDSMLVDPKHHRHFVIRRGQVLREIAEEYGGVMVSFPRSGTQSDKVTLKGAKGCVEAAKKRIQEIIEDLEAQVTLECAIPQKFHRSVMGPKGSRIQQITRDFSVQIKFPDREENPVHSTEPAVQENGDEAGEGREAKDSDPGSPRRCDIIIISGRKEKCEAAKEALEALVPVTVEVEVPFDLHRYVIGQKGSGIRKMMDEFEVNIHVPAPELQSDIIAITGLAANLDRAKAGLLERVKELQAEQEDRALRSFKLSVTVDPKYHPKIIGRKGAVITQIRLEHDVNIQFPDKGDGNQPQDQITITGYEKNTEAARDAILRIVGELEQMVSEDVPLDHRVHARIIGARGKAIRKIMDEFKVDIRFPQSGAPDPNCVTVTGLPENVEEAIDHILNLEEEYLADVVDSEALQVYMKPPVHEEAKAPSRGFVVRDAPWAASSSEKAPDMSSSEEFPSFGAQVAPKTLPWGPKR.

Residue S2 is modified to N-acetylserine. T8 is modified (phosphothreonine). Phosphoserine is present on residues S11, S31, and S35. 14 KH domains span residues 158-229 (PKEH…RLEV), 230-302 (EKAF…AVEV), 303-371 (KKSQ…SVAA), 372-442 (PSWL…EINI), 443-514 (DHKF…DLII), 515-588 (EQRF…SVPI), 589-660 (FKQF…EVSI), 661-734 (PAKL…DIRA), 735-807 (KPEY…SMLV), 808-880 (DPKH…ECAI), 881-979 (PQKF…EVEV), 980-1059 (PFDL…SVTV), 1060-1134 (DPKY…DVPL), and 1135-1209 (DHRV…ALQV). 2 positions are modified to phosphothreonine: T295 and T296. S317 is modified (phosphoserine). Y437 carries the post-translational modification Phosphotyrosine. S645 carries the post-translational modification Phosphoserine. Positions 910-947 (PDREENPVHSTEPAVQENGDEAGEGREAKDSDPGSPRR) are disordered. Residues 932–947 (GEGREAKDSDPGSPRR) are compositionally biased toward basic and acidic residues. K991 carries the N6-acetyllysine modification. Residues 1237 to 1249 (SSEKAPDMSSSEE) are compositionally biased toward polar residues. The tract at residues 1237 to 1268 (SSEKAPDMSSSEEFPSFGAQVAPKTLPWGPKR) is disordered. 2 positions are modified to phosphoserine: S1247 and S1252.

The protein localises to the cytoplasm. Its subcellular location is the nucleus. Appears to play a role in cell sterol metabolism. It may function to protect cells from over-accumulation of cholesterol. This Pongo abelii (Sumatran orangutan) protein is Vigilin (HDLBP).